A 579-amino-acid chain; its full sequence is Lens epithelium-derived growth factor (579 aa).

One can recognise a PWWP domain in the interval 1–64 (MSRDFKPGDL…PKDIFPYSEN (64 aa)). Disordered stretches follow at residues 62 to 81 (SENKDKYGKPNKRKGFNEGL), 88 to 203 (PKVK…EEAA), 215 to 397 (AAPV…SMDS), and 492 to 579 (AEQK…FENK). The span at 94-107 (HQPSHPAVNTSIKE) shows a compositional bias: polar residues. The span at 153 to 173 (KEMHSTKEDEEPSEKNSKEGV) shows a compositional bias: basic and acidic residues. Over residues 184 to 193 (VARRGRKRKA) the composition is skewed to basic residues. The Nuclear localization signal signature appears at 186–196 (RRGRKRKAEKQ). Over residues 215 to 224 (AAPVTVSPKV) the composition is skewed to low complexity. The segment covering 261–308 (EEEKAKKKGPDEKPKKQGKKDEEGQKEEEKPKKEYDKKDGKKEAEPKR) has biased composition (basic and acidic residues). A compositionally biased stretch (acidic residues) spans 321–330 (DSEDEGGEEE). Basic residues predominate over residues 334 to 349 (KKKGGRSFQSTHRRNI). Residues 347-442 (RNIMRGQHEK…SMQQAQKHTE (96 aa)) adopt a coiled-coil conformation. Composition is skewed to basic and acidic residues over residues 352–397 (GQHE…SMDS) and 492–522 (AEQKQHEEANKTKEQWKKGTNKKNEKEKDQT). Residues 387–464 (MEKKRETSMD…VSQVIMEKST (78 aa)) are integrase-binding domain (IBD). Residues 530–543 (GSETQDTNQSQHNG) show a composition bias toward polar residues. A compositionally biased stretch (basic and acidic residues) spans 544 to 579 (ENAEEKDKLEVASKKKTCGEESELEKPAKESAFENK).

The protein belongs to the HDGF family.

It localises to the nucleus. In terms of biological role, transcriptional coactivator involved in neuroepithelial stem cell differentiation and neurogenesis. Involved in particular in lens epithelial cell gene regulation and stress responses. May play an important role in lens epithelial to fiber cell terminal differentiation. May play a protective role during stress-induced apoptosis. The chain is Lens epithelium-derived growth factor (PSIP1) from Gallus gallus (Chicken).